Here is a 511-residue protein sequence, read N- to C-terminus: 60 kDa neurofilament protein (511 aa).

Positions 1–32 (MSVTQKKTEISTTTTYEGESRPSSGMSGFSYS) are disordered. Residues 1-99 (MSVTQKKTEI…KANREREKQD (99 aa)) form a head region. The segment covering 21 to 30 (RPSSGMSGFS) has biased composition (polar residues). The region spanning 96-449 (EKQDMRDLNE…KLLEGEESRV (354 aa)) is the IF rod domain. Residues 100-135 (MRDLNERFANYIEKVRFLEAQNKKLAGELEELKSKW) are coil 1A. Residues 136–145 (GKETSAIKEM) form a linker 1 region. Residues 146–284 (YETELEEARK…VHAQELKELA (139 aa)) form a coil 1B region. The linker 12 stretch occupies residues 285–303 (ALAYRDTTAENREFWRNEL). The tract at residues 304–449 (AQAIRDIQQE…KLLEGEESRV (146 aa)) is coil 2. The segment at 450–511 (GMKQIVEQVV…EEKKSMGSSD (62 aa)) is tail. The disordered stretch occupies residues 479–511 (GYEATGGITTTTTTSSQERRSMSEEKKSMGSSD). Residues 483-492 (TGGITTTTTT) are compositionally biased toward low complexity. Basic and acidic residues predominate over residues 495-511 (QERRSMSEEKKSMGSSD).

The protein belongs to the intermediate filament family.

Functionally, major squid neurofilament protein. The polypeptide is 60 kDa neurofilament protein (Doryteuthis pealeii (Longfin inshore squid)).